We begin with the raw amino-acid sequence, 430 residues long: UDP-N-acetylglucosamine 1-carboxyvinyltransferase (430 aa).

22-23 lines the phosphoenolpyruvate pocket; sequence KN. Position 102 (arginine 102) interacts with UDP-N-acetyl-alpha-D-glucosamine. The active-site Proton donor is the cysteine 126. At cysteine 126 the chain carries 2-(S-cysteinyl)pyruvic acid O-phosphothioketal. Residues 131–135, 172–175, aspartate 317, and isoleucine 339 each bind UDP-N-acetyl-alpha-D-glucosamine; these read RPVDL and KVSV.

It belongs to the EPSP synthase family. MurA subfamily.

It localises to the cytoplasm. It carries out the reaction phosphoenolpyruvate + UDP-N-acetyl-alpha-D-glucosamine = UDP-N-acetyl-3-O-(1-carboxyvinyl)-alpha-D-glucosamine + phosphate. It functions in the pathway cell wall biogenesis; peptidoglycan biosynthesis. Cell wall formation. Adds enolpyruvyl to UDP-N-acetylglucosamine. In Allorhizobium ampelinum (strain ATCC BAA-846 / DSM 112012 / S4) (Agrobacterium vitis (strain S4)), this protein is UDP-N-acetylglucosamine 1-carboxyvinyltransferase.